The primary structure comprises 438 residues: Putative hydrolase MSMEG_3995/MSMEI_3903 (438 aa).

Residues aspartate 95, aspartate 104, glutamate 143, and histidine 208 each contribute to the Zn(2+) site. Lysine 217 is covalently cross-linked (Isoglutamyl lysine isopeptide (Lys-Gln) (interchain with Q-Cter in protein Pup)). A Zn(2+)-binding site is contributed by histidine 400.

It belongs to the peptidase M20 family. Requires Zn(2+) as cofactor.

This Mycolicibacterium smegmatis (strain ATCC 700084 / mc(2)155) (Mycobacterium smegmatis) protein is Putative hydrolase MSMEG_3995/MSMEI_3903.